A 22-amino-acid chain; its full sequence is Bacteriocin serracin-P 23 kDa subunit (22 aa).

Its function is as follows. Major component of a prophage tail tube. Functionally, antibacterial activity against Gram-negative bacterium E.amylovora. The polypeptide is Bacteriocin serracin-P 23 kDa subunit (Serratia plymuthica).